A 110-amino-acid polypeptide reads, in one-letter code: Iron-sulfur cluster assembly protein CyaY (110 aa).

Belongs to the frataxin family.

Involved in iron-sulfur (Fe-S) cluster assembly. May act as a regulator of Fe-S biogenesis. This is Iron-sulfur cluster assembly protein CyaY from Pseudomonas putida (strain GB-1).